The following is an 860-amino-acid chain: Leucine--tRNA ligase (860 aa).

The 'HIGH' region motif lies at P42–H52. The 'KMSKS' region motif lies at K619–S623. Position 622 (K622) interacts with ATP.

The protein belongs to the class-I aminoacyl-tRNA synthetase family.

Its subcellular location is the cytoplasm. It carries out the reaction tRNA(Leu) + L-leucine + ATP = L-leucyl-tRNA(Leu) + AMP + diphosphate. In Pectobacterium carotovorum subsp. carotovorum (strain PC1), this protein is Leucine--tRNA ligase.